The following is a 239-amino-acid chain: 1-(5-phosphoribosyl)-5-[(5-phosphoribosylamino)methylideneamino] imidazole-4-carboxamide isomerase (239 aa).

The Proton acceptor role is filled by Asp-12. Asp-132 acts as the Proton donor in catalysis.

Belongs to the HisA/HisF family.

It is found in the cytoplasm. The enzyme catalyses 1-(5-phospho-beta-D-ribosyl)-5-[(5-phospho-beta-D-ribosylamino)methylideneamino]imidazole-4-carboxamide = 5-[(5-phospho-1-deoxy-D-ribulos-1-ylimino)methylamino]-1-(5-phospho-beta-D-ribosyl)imidazole-4-carboxamide. Its pathway is amino-acid biosynthesis; L-histidine biosynthesis; L-histidine from 5-phospho-alpha-D-ribose 1-diphosphate: step 4/9. The protein is 1-(5-phosphoribosyl)-5-[(5-phosphoribosylamino)methylideneamino] imidazole-4-carboxamide isomerase of Natronomonas pharaonis (strain ATCC 35678 / DSM 2160 / CIP 103997 / JCM 8858 / NBRC 14720 / NCIMB 2260 / Gabara) (Halobacterium pharaonis).